Consider the following 559-residue polypeptide: CTP synthase (559 aa).

Positions 1 to 270 (MTKFVFVTGG…DGLICDKLRI (270 aa)) are amidoligase domain. CTP is bound at residue S13. S13 is a UTP binding site. Residues 14–19 (SLGKGI) and D71 contribute to the ATP site. Residues D71 and E144 each coordinate Mg(2+). CTP-binding positions include 151 to 153 (DIE), 191 to 196 (KTKPTQ), and K227. Residues 191–196 (KTKPTQ) and K227 each bind UTP. One can recognise a Glutamine amidotransferase type-1 domain in the interval 295 to 547 (SIAMVGKYVD…IKAALDHKAR (253 aa)). G356 is a binding site for L-glutamine. Catalysis depends on C383, which acts as the Nucleophile; for glutamine hydrolysis. L-glutamine is bound by residues 384–387 (LGMQ), E407, and R473. Active-site residues include H520 and E522.

The protein belongs to the CTP synthase family. As to quaternary structure, homotetramer.

It carries out the reaction UTP + L-glutamine + ATP + H2O = CTP + L-glutamate + ADP + phosphate + 2 H(+). The catalysed reaction is L-glutamine + H2O = L-glutamate + NH4(+). It catalyses the reaction UTP + NH4(+) + ATP = CTP + ADP + phosphate + 2 H(+). It functions in the pathway pyrimidine metabolism; CTP biosynthesis via de novo pathway; CTP from UDP: step 2/2. Its activity is regulated as follows. Allosterically activated by GTP, when glutamine is the substrate; GTP has no effect on the reaction when ammonia is the substrate. The allosteric effector GTP functions by stabilizing the protein conformation that binds the tetrahedral intermediate(s) formed during glutamine hydrolysis. Inhibited by the product CTP, via allosteric rather than competitive inhibition. Functionally, catalyzes the ATP-dependent amination of UTP to CTP with either L-glutamine or ammonia as the source of nitrogen. Regulates intracellular CTP levels through interactions with the four ribonucleotide triphosphates. The polypeptide is CTP synthase (Variovorax paradoxus (strain S110)).